The chain runs to 265 residues: Small ribosomal subunit protein uS2 (265 aa).

The interval 231-265 (VEEEYEDYEGAEDDYEYDETEYTDSVIPDDEEEAE) is disordered.

This sequence belongs to the universal ribosomal protein uS2 family.

This chain is Small ribosomal subunit protein uS2, found in Trichormus variabilis (strain ATCC 29413 / PCC 7937) (Anabaena variabilis).